The chain runs to 506 residues: ATP synthase subunit alpha (506 aa).

Gly171–Thr178 is an ATP binding site.

It belongs to the ATPase alpha/beta chains family. In terms of assembly, F-type ATPases have 2 components, CF(1) - the catalytic core - and CF(0) - the membrane proton channel. CF(1) has five subunits: alpha(3), beta(3), gamma(1), delta(1), epsilon(1). CF(0) has four main subunits: a(1), b(1), b'(1) and c(9-12).

It localises to the cellular thylakoid membrane. It catalyses the reaction ATP + H2O + 4 H(+)(in) = ADP + phosphate + 5 H(+)(out). In terms of biological role, produces ATP from ADP in the presence of a proton gradient across the membrane. The alpha chain is a regulatory subunit. This chain is ATP synthase subunit alpha, found in Trichormus variabilis (strain ATCC 29413 / PCC 7937) (Anabaena variabilis).